Consider the following 559-residue polypeptide: Hepatocyte nuclear factor 1-alpha (559 aa).

The 32-residue stretch at 13–44 (GPGRLSALQEQLIWALLGSGLSREVLVHALGE) folds into the HNF-p1 domain. Residues 14–43 (PGRLSALQEQLIWALLGSGLSREVLVHALG) are dimerization. Over residues 49–62 (RVTPGAEKGDRGDG) the composition is skewed to basic and acidic residues. Residues 49–73 (RVTPGAEKGDRGDGESSEEGEMDFP) are disordered. A POU-specific atypical domain is found at 78 to 173 (QELEALAPEE…ISQQFTNARH (96 aa)). Interaction with DNA regions lie at residues 121–123 (QRE), 134–140 (HLSQHLN), 146–149 (KNQK), 192–195 (RFKW), 252–254 (RVY), and 259–262 (NRRK). The short motif at 186 to 194 (RKGRRNRFK) is the Nuclear localization signal element. Positions 188–268 (GRRNRFKWGP…NRRKEEAFRH (81 aa)) form a DNA-binding region, homeobox; HNF1-type. Residues 492–559 (TDPEEQTDQP…IPAQMVSTAQ (68 aa)) form a disordered region. The segment covering 499 to 522 (DQPIQEDSLHLQSPSPVPVSSGNL) has biased composition (polar residues).

The protein belongs to the HNF1 homeobox family. In terms of assembly, binds DNA as a dimer. As to expression, expressed in liver, intestine, spleen and kidney.

It localises to the nucleus. Transcriptional activator that regulates the tissue specific expression of multiple genes, especially in pancreas and liver. Binds to the promoter of the albumin gene. This Salmo salar (Atlantic salmon) protein is Hepatocyte nuclear factor 1-alpha (hnf1a).